A 32-amino-acid chain; its full sequence is Ranatuerin-2Lb (32 aa).

Cysteines 27 and 32 form a disulfide.

In terms of tissue distribution, expressed by the skin glands.

It is found in the secreted. In terms of biological role, antibacterial activity against Gram-positive bacterium S.aureus and Gram-negative bacterium E.coli. Has activity against C.albicans. In Rana luteiventris (Columbia spotted frog), this protein is Ranatuerin-2Lb.